Consider the following 693-residue polypeptide: Polyribonucleotide nucleotidyltransferase (693 aa).

2 residues coordinate Mg(2+): Asp-490 and Asp-496. Positions 557–617 (PRISWFFIDP…EKVQEAVEYI (61 aa)) constitute a KH domain. Residues 627–691 (GDLYTGKVTR…DAGRLQFRRL (65 aa)) form the S1 motif domain.

It belongs to the polyribonucleotide nucleotidyltransferase family. Requires Mg(2+) as cofactor.

It localises to the cytoplasm. The enzyme catalyses RNA(n+1) + phosphate = RNA(n) + a ribonucleoside 5'-diphosphate. Involved in mRNA degradation. Catalyzes the phosphorolysis of single-stranded polyribonucleotides processively in the 3'- to 5'-direction. The protein is Polyribonucleotide nucleotidyltransferase of Fervidobacterium nodosum (strain ATCC 35602 / DSM 5306 / Rt17-B1).